The following is a 432-amino-acid chain: Adenosylhomocysteinase (432 aa).

The substrate site is built by Thr-57, Asp-131, and Glu-156. NAD(+) is bound at residue 157–159; sequence TTT. Residue Ser-183 is modified to Phosphoserine. Substrate contacts are provided by Lys-186 and Asp-190. Lys-186 bears the N6-(2-hydroxyisobutyryl)lysine mark. Tyr-193 is subject to Phosphotyrosine. NAD(+) contacts are provided by residues 222–227, Glu-243, Asn-248, 299–301, Asn-346, His-353, Lys-426, 426–430, and Tyr-430; these read GDVGKG, IGH, and KPDHY.

The protein belongs to the adenosylhomocysteinase family. In terms of assembly, homotetramer. Interaction with AHCYL1. Requires NAD(+) as cofactor.

The protein localises to the cytoplasm. It localises to the melanosome. It is found in the nucleus. The protein resides in the endoplasmic reticulum. The catalysed reaction is S-adenosyl-L-homocysteine + H2O = L-homocysteine + adenosine. It functions in the pathway amino-acid biosynthesis; L-homocysteine biosynthesis; L-homocysteine from S-adenosyl-L-homocysteine: step 1/1. In terms of biological role, catalyzes the hydrolysis of S-adenosyl-L-homocysteine to form adenosine and homocysteine. Binds copper ions. This chain is Adenosylhomocysteinase (Ahcy), found in Rattus norvegicus (Rat).